The chain runs to 266 residues: Short-chain dehydrogenase/reductase tropE (266 aa).

3 residues coordinate NADP(+): L18, D69, and N96. Catalysis depends on S147, which acts as the Proton donor. 3 residues coordinate NADP(+): Y181, K185, and T216. Y181 (proton acceptor) is an active-site residue. The Lowers pKa of active site Tyr role is filled by K185.

The protein belongs to the short-chain dehydrogenases/reductases (SDR) family.

The protein operates within secondary metabolite biosynthesis. In terms of biological role, short-chain dehydrogenase/reductase; part of the gene cluster that mediates the biosynthesis of the tropolone class of fungal maleic anhydrides. The pathway begins with the synthesis of 3-methylorcinaldehyde by the non-reducing polyketide synthase (PKS) tropA. 3-methylorcinaldehyde is the substrate for the FAD-dependent monooxygenase tropB to yield a dearomatized hydroxycyclohexadione. The 2-oxoglutarate-dependent dioxygenase tropC then performs the oxidative ring expansion to provide the first tropolone metabolite stipitaldehyde. Trop D converts stipitaldehyde into stipitacetal which is in turn converted to stipitalide by the short-chain dehydrogenase/reductase tropE. The next steps involve tropF, tropG, tropH, tropI and tropJ to form successive tropolone maleic anhydrides including stipitaldehydic, stipitatonic and stipitatic acids. In Talaromyces stipitatus (strain ATCC 10500 / CBS 375.48 / QM 6759 / NRRL 1006) (Penicillium stipitatum), this protein is Short-chain dehydrogenase/reductase tropE.